Reading from the N-terminus, the 507-residue chain is MTRYAAPGTEGAIVSYQSRYDHFIGGEYVPPARGQYFENPSPVNGLPFTEIARGTADDVERALDAAHEAAPGWGRTSVTERSDILLKIADRMEANLERLAVAESWENGKPVRETLAADIPLAIDHFRYFAGAVRAQEGSLGEIDDDTVAYHFHEPLGVVAQIIPWNFPILMATWKLAPALAAGNAVVLKPAEQTPASIHYWLSLVADLLPPGVLNVVNGFGVEAGKPLASSPRVAKVAFTGETTTGRLIMQYASENIKPVTLELGGKSPNIFFEDVWARDDDFRDKALEGFTMFALNQGEVCTCPSRALVQRGVYAEFMEAAVARTELIKPGHPLDTDTMIGAQASNDQLEKILSYLDIGRQEGAKVLTGGERIEHDGELKGGYYVQPTIFEGHNRMRIFQEEIFGPVVSVTSFDDFDDAVKTANDTLYGLGAGVWTRDMNTAYRAGRAIQAGRVWTNCYHAYPAHAAFGGYKQSGIGRENHKMMLEHYQQTKNILCSYSPKKLGFF.

Residue 219–225 participates in NAD(+) binding; it reads GFGVEAG. Residues E263 and C302 contribute to the active site.

The protein belongs to the aldehyde dehydrogenase family.

It catalyses the reaction an aldehyde + NAD(+) + H2O = a carboxylate + NADH + 2 H(+). The chain is Probable aldehyde dehydrogenase from Streptomyces coelicolor (strain ATCC BAA-471 / A3(2) / M145).